Here is a 95-residue protein sequence, read N- to C-terminus: uncharacterized protein (95 aa).

A signal peptide spans M1–V21.

This is an uncharacterized protein from Archaeoglobus fulgidus (strain ATCC 49558 / DSM 4304 / JCM 9628 / NBRC 100126 / VC-16).